The primary structure comprises 570 residues: Phosphoenolpyruvate-protein phosphotransferase (570 aa).

The active-site Tele-phosphohistidine intermediate is His189. Positions 296 and 332 each coordinate phosphoenolpyruvate. 2 residues coordinate Mg(2+): Glu431 and Asp455. Residues 454–455 and Arg465 contribute to the phosphoenolpyruvate site; that span reads ND. The active-site Proton donor is the Cys502.

The protein belongs to the PEP-utilizing enzyme family. Homodimer. Interacts with FloT. It depends on Mg(2+) as a cofactor.

Its subcellular location is the cytoplasm. It localises to the membrane raft. It catalyses the reaction L-histidyl-[protein] + phosphoenolpyruvate = N(pros)-phospho-L-histidyl-[protein] + pyruvate. In terms of biological role, general (non sugar-specific) component of the phosphoenolpyruvate-dependent sugar phosphotransferase system (sugar PTS). This major carbohydrate active-transport system catalyzes the phosphorylation of incoming sugar substrates concomitantly with their translocation across the cell membrane. Enzyme I transfers the phosphoryl group from phosphoenolpyruvate (PEP) to the phosphoryl carrier protein (HPr). This Bacillus subtilis (strain 168) protein is Phosphoenolpyruvate-protein phosphotransferase (ptsI).